Reading from the N-terminus, the 310-residue chain is Alpha/beta hydrolase domain-containing protein 17C (310 aa).

Residues S192, D257, and H286 each act as charge relay system in the active site.

Belongs to the AB hydrolase superfamily. ABHD17 family. In terms of processing, palmitoylated on cysteine residues located in a cysteine cluster at the N-terminus which promotes membrane localization.

Its subcellular location is the recycling endosome membrane. It is found in the cell projection. The protein localises to the dendritic spine. It localises to the postsynaptic density membrane. The enzyme catalyses S-hexadecanoyl-L-cysteinyl-[protein] + H2O = L-cysteinyl-[protein] + hexadecanoate + H(+). Its function is as follows. Hydrolyzes fatty acids from S-acylated cysteine residues in proteins. This is Alpha/beta hydrolase domain-containing protein 17C from Xenopus tropicalis (Western clawed frog).